The primary structure comprises 910 residues: MAEAKRDYYEVLGLSRDADDNDIKKAFRKLAKKYHPDRNKAPDAAQIFAEINEANDVLSNPKKRANYDKYGHDGVDNEGGFAFQADVFDSFFEEIEKSGAFDNLSESNTKKKEKTKTKKKGWFWGKSKQEESTSDTTEYADVDAGLEDYPPQSDYPDDIPDVDARIEEVDQSAYADDIPDVDAGMDWEQNAEVANSASEIIPDVDAGLADEFNTSSAAPQASDWEAMIGNPEYGYFDAAGEWNWKGFFDEAGQWVWLEETEPSSVSNDETTTDSDAVTAATTVEETDQDSWTANSAPEPVDVETPVELQPETEPEPIITLSSEPVEAPASVVIEPTPEIEETTSAVEMDASVKADVSDEADATNEPTEQDTISEPEQETDAAALEEINHTTADLEPAEVSATNDLEQDVVEKVNFSEPESTVDTAATDPVVEQATETSTNGFKFFNFSSFVLSDQNPNPQTPTHHEEDAAAPEPTVDETSGESTAPEVTIAESTVELETAAEINNPATFVEEYLQPTKTTVVDKLDEPTVAKPTVSDSENSVAPEPEFVAGPEQTFSWKPAISETEEIPLTAVEPASETQTLIAEDVTSPVTPTATAIPAPSINAVPTAPVAETFEAAVDFLKEAAKIEAQLPLVPTVPEQIDGTDPSLLTQWDEYLEKTRKLFHKLFLTEQLPFIVKTDQFEIVDPNLDEHNVNLIYTEHVPQICFLNEQLKEIRYTRKLVDPQTQVTTTESITLEVQLSHKSQTEAIAIFKGFGHDYGSGCGDLKVVLKVIPSVFFQLQADGLHTAALVDPLVAYNGGLIDVFGPVNSFKVDIEGGIANNDLIEFNQLGVLRTKTKRGSLYVHLYYSSVAKKGTKTNCQVQQFFDLVHVEYKLLNYNLKQLHNYHSALTAQKKTLDRKSYQCLAVESH.

Residues 4–73 (AKRDYYEVLG…RANYDKYGHD (70 aa)) enclose the J domain. Disordered regions lie at residues 102 to 160 (DNLS…DDIP), 260 to 408 (TEPS…LEQD), and 451 to 486 (VLSDQNPNPQTPTHHEEDAAAPEPTVDETSGESTAP). The segment covering 111-121 (KKEKTKTKKKG) has biased composition (basic residues). Residues 273–283 (DSDAVTAATTV) show a composition bias toward low complexity. Residues 357–379 (SDEADATNEPTEQDTISEPEQET) are compositionally biased toward acidic residues. Residues 451–462 (VLSDQNPNPQTP) are compositionally biased toward polar residues.

In Mycoplasma pneumoniae (strain ATCC 29342 / M129 / Subtype 1) (Mycoplasmoides pneumoniae), this protein is DnaJ-like protein MG200 homolog.